The chain runs to 295 residues: Protease HtpX (295 aa).

Helical transmembrane passes span 4–24 (IVLF…ILSL) and 34–54 (GLMI…LLMS). Residue His139 participates in Zn(2+) binding. The active site involves Glu140. His143 contacts Zn(2+). The next 2 membrane-spanning stretches (helical) occupy residues 147 to 167 (GDMV…IFIS) and 194 to 214 (IVYM…ASII). Glu223 is a binding site for Zn(2+).

It belongs to the peptidase M48B family. Zn(2+) serves as cofactor.

It is found in the cell inner membrane. The protein is Protease HtpX of Photorhabdus laumondii subsp. laumondii (strain DSM 15139 / CIP 105565 / TT01) (Photorhabdus luminescens subsp. laumondii).